The chain runs to 177 residues: UPF0114 protein HPAG1_0183 (177 aa).

A run of 4 helical transmembrane segments spans residues 15–35 (WLLA…GYVF), 54–74 (LVLS…VLMV), 102–122 (FNAL…IFLL), and 145–165 (PIFW…LAAV).

It belongs to the UPF0114 family.

It is found in the cell membrane. In Helicobacter pylori (strain HPAG1), this protein is UPF0114 protein HPAG1_0183.